Reading from the N-terminus, the 243-residue chain is Type III pantothenate kinase (243 aa).

Position 7–14 (7–14 (DLGNSRFK)) interacts with ATP. Substrate contacts are provided by residues tyrosine 91 and 98–101 (GVDR). The active-site Proton acceptor is the aspartate 100. Residue threonine 122 participates in ATP binding. Residue threonine 172 coordinates substrate.

This sequence belongs to the type III pantothenate kinase family. In terms of assembly, homodimer. It depends on NH4(+) as a cofactor. Requires K(+) as cofactor.

Its subcellular location is the cytoplasm. The catalysed reaction is (R)-pantothenate + ATP = (R)-4'-phosphopantothenate + ADP + H(+). Its pathway is cofactor biosynthesis; coenzyme A biosynthesis; CoA from (R)-pantothenate: step 1/5. Its function is as follows. Catalyzes the phosphorylation of pantothenate (Pan), the first step in CoA biosynthesis. The polypeptide is Type III pantothenate kinase (Stenotrophomonas maltophilia (strain K279a)).